The sequence spans 553 residues: Arginine--tRNA ligase (553 aa).

Positions 130–140 (ANPTGDLHIGH) match the 'HIGH' region motif.

It belongs to the class-I aminoacyl-tRNA synthetase family. As to quaternary structure, monomer.

It is found in the cytoplasm. It carries out the reaction tRNA(Arg) + L-arginine + ATP = L-arginyl-tRNA(Arg) + AMP + diphosphate. The polypeptide is Arginine--tRNA ligase (Staphylococcus aureus (strain MSSA476)).